A 123-amino-acid chain; its full sequence is Alpha-lactalbumin (123 aa).

Residues K1–E123 form the C-type lysozyme domain. 4 disulfide bridges follow: C6–C120, C28–C111, C61–C77, and C73–C91. N-linked (GlcNAc...) asparagine glycosylation is present at N45. Ca(2+) is bound by residues K79, D82, D84, D87, and D88.

The protein belongs to the glycosyl hydrolase 22 family. As to quaternary structure, lactose synthase (LS) is a heterodimer of a catalytic component, beta1,4-galactosyltransferase (beta4Gal-T1) and a regulatory component, alpha-lactalbumin (LA). Mammary gland specific. Secreted in milk.

Its subcellular location is the secreted. In terms of biological role, regulatory subunit of lactose synthase, changes the substrate specificity of galactosyltransferase in the mammary gland making glucose a good acceptor substrate for this enzyme. This enables LS to synthesize lactose, the major carbohydrate component of milk. In other tissues, galactosyltransferase transfers galactose onto the N-acetylglucosamine of the oligosaccharide chains in glycoproteins. The sequence is that of Alpha-lactalbumin (LALBA) from Papio cynocephalus (Yellow baboon).